The chain runs to 238 residues: Lactate utilization protein A (238 aa).

The protein belongs to the LutA/YkgE family.

Its function is as follows. Is involved in L-lactate degradation and allows cells to grow with lactate as the sole carbon source. This chain is Lactate utilization protein A, found in Geobacillus sp. (strain WCH70).